Here is a 252-residue protein sequence, read N- to C-terminus: MERLLIVNADDFGLSKGQNYGIIEACRNGIVTSTTALVNGQAIDHAVQLSRDEPSLAIGMHFVLTMGKPLTAMPGLTRDGVLGKWIWQLAEEDALPLEEITQELASQYLRFIELFGRKPTHLDSHHHVHMFPQIFPIVARFAAEEGIALRIDRQPLSNAGDLPANLRSSQGFSSAFYGEEISEALFLQVLDDASHRGDPSLEVMCHPAFIDNTIRQSAYCFPRLTELEVLTSASLKYAIAERGYRLGSYLDV.

Mg(2+) contacts are provided by H61 and H125.

The protein belongs to the YdjC deacetylase family. ChbG subfamily. Homodimer. Mg(2+) serves as cofactor.

The protein resides in the cytoplasm. It catalyses the reaction N,N'-diacetylchitobiose + H2O = N-acetyl-beta-D-glucosaminyl-(1-&gt;4)-D-glucosamine + acetate. The catalysed reaction is diacetylchitobiose-6'-phosphate + H2O = N'-monoacetylchitobiose-6'-phosphate + acetate. It functions in the pathway glycan degradation; chitin degradation. In terms of biological role, involved in the degradation of chitin. ChbG is essential for growth on the acetylated chitooligosaccharides chitobiose and chitotriose but is dispensable for growth on cellobiose and chitosan dimer, the deacetylated form of chitobiose. Deacetylation of chitobiose-6-P and chitotriose-6-P is necessary for both the activation of the chb promoter by the regulatory protein ChbR and the hydrolysis of phosphorylated beta-glucosides by the phospho-beta-glucosidase ChbF. Catalyzes the removal of only one acetyl group from chitobiose-6-P to yield monoacetylchitobiose-6-P, the inducer of ChbR and the substrate of ChbF. The polypeptide is Chitooligosaccharide deacetylase (Shigella flexneri serotype 5b (strain 8401)).